Reading from the N-terminus, the 443-residue chain is Xaa-Pro dipeptidase (443 aa).

Residues D246, D257, H339, E384, and E423 each coordinate Mn(2+).

It belongs to the peptidase M24B family. Bacterial-type prolidase subfamily. Mn(2+) is required as a cofactor.

The catalysed reaction is Xaa-L-Pro dipeptide + H2O = an L-alpha-amino acid + L-proline. Its function is as follows. Splits dipeptides with a prolyl residue in the C-terminal position. In Salmonella paratyphi B (strain ATCC BAA-1250 / SPB7), this protein is Xaa-Pro dipeptidase.